The sequence spans 165 residues: Small ribosomal subunit protein eS10 (165 aa).

Tyrosine 12 is modified (phosphotyrosine). Residues 90 to 165 (VPATLRRSRP…FGRGRGQPPQ (76 aa)) are disordered. The span at 97–128 (SRPETGRPRPKGPEGERPARFTRGEADRDTYR) shows a compositional bias: basic and acidic residues. Residues lysine 138 and lysine 139 each participate in a glycyl lysine isopeptide (Lys-Gly) (interchain with G-Cter in ubiquitin) cross-link. Serine 146 carries the phosphoserine modification. Omega-N-methylarginine is present on arginine 153. The segment covering 154 to 165 (GGFGRGRGQPPQ) has biased composition (gly residues). 2 positions are modified to symmetric dimethylarginine: arginine 158 and arginine 160.

Belongs to the eukaryotic ribosomal protein eS10 family. In terms of assembly, component of the small ribosomal subunit. The methylated form interacts with NPM1. In terms of processing, methylated by PRMT5. Methylation is necessary for its interaction with NPS1, its localization in the granular component (GC) region of the nucleolus, for the proper assembly of ribosomes, protein synthesis and optimal cell proliferation. Monoubiquitinated by ZNF598 when a ribosome has stalled during translation of poly(A) sequences, leading to preclude synthesis of a long poly-lysine tail and initiate the ribosome quality control (RQC) pathway to degrade the potentially detrimental aberrant nascent polypeptide. Deubiquitinated by OTUD3 and USP21, antagonizing ZNF598 activity. Deubiquitinated by OTUD1, antagonizing ZNF598 activity and stimulating formation of polysomes: deubiquitination by OTUD1 promotes stability and translation of a subset mRNAs with a high abundance of rare codons can limit the translation rate. Deubiquitinated by USP10.

It localises to the cytoplasm. It is found in the nucleus. The protein resides in the nucleolus. In terms of biological role, component of the 40S ribosomal subunit. The ribosome is a large ribonucleoprotein complex responsible for the synthesis of proteins in the cell. In Rattus norvegicus (Rat), this protein is Small ribosomal subunit protein eS10 (Rps10).